The primary structure comprises 316 residues: HTH-type transcriptional regulator cbl (316 aa).

One can recognise an HTH lysR-type domain in the interval Met1–Met59. Residues Leu19–Arg38 constitute a DNA-binding region (H-T-H motif).

The protein belongs to the LysR transcriptional regulatory family.

May be an accessory regulatory protein within the cys regulon. In Escherichia coli (strain K12), this protein is HTH-type transcriptional regulator cbl (cbl).